Consider the following 333-residue polypeptide: tRNA uridine(34) hydroxylase (333 aa).

Positions 123–217 (SDPEVVLVDT…YLEEVNKAES (95 aa)) constitute a Rhodanese domain. Cysteine 177 serves as the catalytic Cysteine persulfide intermediate. A compositionally biased stretch (basic and acidic residues) spans 313–327 (QKKEALRKQSAEKNK). The tract at residues 313-333 (QKKEALRKQSAEKNKAKQANA) is disordered.

Belongs to the TrhO family.

The catalysed reaction is uridine(34) in tRNA + AH2 + O2 = 5-hydroxyuridine(34) in tRNA + A + H2O. Its function is as follows. Catalyzes oxygen-dependent 5-hydroxyuridine (ho5U) modification at position 34 in tRNAs. This chain is tRNA uridine(34) hydroxylase, found in Shewanella oneidensis (strain ATCC 700550 / JCM 31522 / CIP 106686 / LMG 19005 / NCIMB 14063 / MR-1).